Consider the following 464-residue polypeptide: ATP synthase subunit beta (464 aa).

Position 153 to 160 (153 to 160 (GGAGVGKT)) interacts with ATP.

It belongs to the ATPase alpha/beta chains family. As to quaternary structure, F-type ATPases have 2 components, CF(1) - the catalytic core - and CF(0) - the membrane proton channel. CF(1) has five subunits: alpha(3), beta(3), gamma(1), delta(1), epsilon(1). CF(0) has three main subunits: a(1), b(2) and c(9-12). The alpha and beta chains form an alternating ring which encloses part of the gamma chain. CF(1) is attached to CF(0) by a central stalk formed by the gamma and epsilon chains, while a peripheral stalk is formed by the delta and b chains.

The protein localises to the cell inner membrane. It carries out the reaction ATP + H2O + 4 H(+)(in) = ADP + phosphate + 5 H(+)(out). Functionally, produces ATP from ADP in the presence of a proton gradient across the membrane. The catalytic sites are hosted primarily by the beta subunits. In Burkholderia cenocepacia (strain ATCC BAA-245 / DSM 16553 / LMG 16656 / NCTC 13227 / J2315 / CF5610) (Burkholderia cepacia (strain J2315)), this protein is ATP synthase subunit beta.